Here is a 234-residue protein sequence, read N- to C-terminus: Orotidine 5'-phosphate decarboxylase (234 aa).

Substrate contacts are provided by residues Asp-14, Lys-36, 63 to 72 (DMKLLDIDNT), Thr-118, Arg-179, Gln-188, Gly-208, and Arg-209. The Proton donor role is filled by Lys-65.

It belongs to the OMP decarboxylase family. Type 1 subfamily. As to quaternary structure, homodimer.

The enzyme catalyses orotidine 5'-phosphate + H(+) = UMP + CO2. It participates in pyrimidine metabolism; UMP biosynthesis via de novo pathway; UMP from orotate: step 2/2. In terms of biological role, catalyzes the decarboxylation of orotidine 5'-monophosphate (OMP) to uridine 5'-monophosphate (UMP). This chain is Orotidine 5'-phosphate decarboxylase, found in Rhizobium meliloti (strain 1021) (Ensifer meliloti).